The following is a 125-amino-acid chain: Small ribosomal subunit protein uS13 (125 aa).

Belongs to the universal ribosomal protein uS13 family. In terms of assembly, part of the 30S ribosomal subunit. Forms a loose heterodimer with protein S19. Forms two bridges to the 50S subunit in the 70S ribosome.

In terms of biological role, located at the top of the head of the 30S subunit, it contacts several helices of the 16S rRNA. In the 70S ribosome it contacts the 23S rRNA (bridge B1a) and protein L5 of the 50S subunit (bridge B1b), connecting the 2 subunits; these bridges are implicated in subunit movement. Contacts the tRNAs in the A and P-sites. This chain is Small ribosomal subunit protein uS13, found in Rickettsia bellii (strain OSU 85-389).